An 846-amino-acid polypeptide reads, in one-letter code: DNA mismatch repair protein MutS (846 aa).

610–617 (GPNMGGKS) lines the ATP pocket.

It belongs to the DNA mismatch repair MutS family.

Its function is as follows. This protein is involved in the repair of mismatches in DNA. It is possible that it carries out the mismatch recognition step. This protein has a weak ATPase activity. This chain is DNA mismatch repair protein MutS, found in Legionella pneumophila (strain Corby).